Consider the following 273-residue polypeptide: Imidazole glycerol phosphate synthase subunit HisF (273 aa).

Residues Asp-11 and Asp-134 contribute to the active site.

It belongs to the HisA/HisF family. Heterodimer of HisH and HisF.

The protein resides in the cytoplasm. It carries out the reaction 5-[(5-phospho-1-deoxy-D-ribulos-1-ylimino)methylamino]-1-(5-phospho-beta-D-ribosyl)imidazole-4-carboxamide + L-glutamine = D-erythro-1-(imidazol-4-yl)glycerol 3-phosphate + 5-amino-1-(5-phospho-beta-D-ribosyl)imidazole-4-carboxamide + L-glutamate + H(+). The protein operates within amino-acid biosynthesis; L-histidine biosynthesis; L-histidine from 5-phospho-alpha-D-ribose 1-diphosphate: step 5/9. In terms of biological role, IGPS catalyzes the conversion of PRFAR and glutamine to IGP, AICAR and glutamate. The HisF subunit catalyzes the cyclization activity that produces IGP and AICAR from PRFAR using the ammonia provided by the HisH subunit. The protein is Imidazole glycerol phosphate synthase subunit HisF of Methanococcoides burtonii (strain DSM 6242 / NBRC 107633 / OCM 468 / ACE-M).